The following is a 202-amino-acid chain: HGRGMKHSLPDLPYDYGALEPHINAQIMELHHSKHHAAYVNNLNATEEKYREALARGDVTAHVALQPALKFKGGGHINHTIFWTNLSPNGGGEPKGELLEAIKRDFGSFDKFKERLTAVSVGVQGSGWGWLGFNKEQGHLQIAACANQDPLQGTTGLIPLLGIDVWEHAYYLQYKNVRPDYLKAIWNVITWENVTERYMACK.

Residues 1–5 (HGRGM) constitute a mitochondrion transit peptide. H31 provides a ligand contact to Mn(2+). A 3'-nitrotyrosine modification is found at Y39. K49 carries the N6-acetyllysine; alternate modification. Position 49 is an N6-succinyllysine; alternate (K49). H79 contacts Mn(2+). Position 95 is an N6-acetyllysine (K95). An N6-acetyllysine; alternate mark is found at K103 and K111. N6-succinyllysine; alternate is present on residues K103 and K111. Mn(2+) is bound by residues D164 and H168. An N6-acetyllysine modification is found at K183.

This sequence belongs to the iron/manganese superoxide dismutase family. Homotetramer. The cofactor is Mn(2+). Post-translationally, nitrated under oxidative stress. Nitration coupled with oxidation inhibits the catalytic activity. Acetylation at Lys-122 decreases enzymatic activity. Deacetylated by SIRT3 upon exposure to ionizing radiations or after long fasting. In terms of processing, polyubiquitinated; leading to proteasomal degradation. Deubiquitinated by USP36 which increases protein stability.

The protein localises to the mitochondrion matrix. The catalysed reaction is 2 superoxide + 2 H(+) = H2O2 + O2. In terms of biological role, destroys superoxide anion radicals which are normally produced within the cells and which are toxic to biological systems. This is Superoxide dismutase [Mn], mitochondrial (SOD2) from Oryctolagus cuniculus (Rabbit).